Here is a 281-residue protein sequence, read N- to C-terminus: Ribosomal RNA small subunit methyltransferase A (281 aa).

The S-adenosyl-L-methionine site is built by Asn36, Leu38, Gly63, Glu84, Asp109, and Asn127.

The protein belongs to the class I-like SAM-binding methyltransferase superfamily. rRNA adenine N(6)-methyltransferase family. RsmA subfamily.

It localises to the cytoplasm. The catalysed reaction is adenosine(1518)/adenosine(1519) in 16S rRNA + 4 S-adenosyl-L-methionine = N(6)-dimethyladenosine(1518)/N(6)-dimethyladenosine(1519) in 16S rRNA + 4 S-adenosyl-L-homocysteine + 4 H(+). Functionally, specifically dimethylates two adjacent adenosines (A1518 and A1519) in the loop of a conserved hairpin near the 3'-end of 16S rRNA in the 30S particle. May play a critical role in biogenesis of 30S subunits. The protein is Ribosomal RNA small subunit methyltransferase A of Borreliella burgdorferi (strain ATCC 35210 / DSM 4680 / CIP 102532 / B31) (Borrelia burgdorferi).